The primary structure comprises 450 residues: Probable ECA polymerase (450 aa).

11 helical membrane passes run 6–26 (FSGL…LTWF), 37–57 (VFFS…TSVL), 63–83 (VGVA…CFYA), 118–138 (VILM…NGFL), 155–175 (GVAL…VYFL), 181–201 (AWLF…MIVG), 207–227 (IIIA…ISLW), 228–248 (MLAA…LKRY), 341–361 (LVVM…GLII), 378–398 (YKAA…IVLA), and 410–430 (VFFI…YWLF).

This sequence belongs to the WzyE family. In terms of assembly, probably part of a complex composed of WzxE, WzyE and WzzE.

The protein localises to the cell inner membrane. The protein operates within bacterial outer membrane biogenesis; enterobacterial common antigen biosynthesis. Functionally, probably involved in the polymerization of enterobacterial common antigen (ECA) trisaccharide repeat units. In Escherichia coli O7:K1 (strain IAI39 / ExPEC), this protein is Probable ECA polymerase.